Reading from the N-terminus, the 303-residue chain is Protease HtpX (303 aa).

2 consecutive transmembrane segments (helical) span residues 4 to 24 (IGLFLLTNLAVLVVFSIVFGI) and 42 to 62 (IASLAVMCAVYGMIGSMISLF). H149 provides a ligand contact to Zn(2+). E150 is an active-site residue. Position 153 (H153) interacts with Zn(2+). 2 consecutive transmembrane segments (helical) span residues 157–177 (GDMVTLALIQGVVNAFVMFFA) and 200–220 (FVTSIVMDILLGFLASAIVMW). E226 provides a ligand contact to Zn(2+).

This sequence belongs to the peptidase M48B family. It depends on Zn(2+) as a cofactor.

It is found in the cell inner membrane. The sequence is that of Protease HtpX from Psychrobacter sp. (strain PRwf-1).